Reading from the N-terminus, the 1212-residue chain is Nucleolar protein 6 (1212 aa).

Disordered stretches follow at residues 1–72 (MGKI…PVSI) and 1156–1212 (KREQ…KSLS). Over residues 1197–1212 (LKRKSLIKSRPLKSLS) the composition is skewed to basic residues.

This sequence belongs to the NRAP family. Part of the small subunit (SSU) processome, composed of more than 70 proteins and the RNA chaperone small nucleolar RNA (snoRNA) U3.

It is found in the nucleus. Its subcellular location is the nucleolus. It localises to the chromosome. In terms of biological role, part of the small subunit (SSU) processome, first precursor of the small eukaryotic ribosomal subunit. During the assembly of the SSU processome in the nucleolus, many ribosome biogenesis factors, an RNA chaperone and ribosomal proteins associate with the nascent pre-rRNA and work in concert to generate RNA folding, modifications, rearrangements and cleavage as well as targeted degradation of pre-ribosomal RNA by the RNA exosome. This is Nucleolar protein 6 from Drosophila pseudoobscura pseudoobscura (Fruit fly).